Reading from the N-terminus, the 659-residue chain is tRNA (guanine(26)-N(2))-dimethyltransferase (659 aa).

The transit peptide at 1 to 23 directs the protein to the mitochondrion; sequence MQGSSLWLSLTFRSARVLSRARF. Residues 55–499 enclose the Trm1 methyltransferase domain; sequence TTVTEGAAKI…APASALWDIM (445 aa). Position 82 (Arg-82) interacts with S-adenosyl-L-methionine. Phosphoserine is present on Ser-120. S-adenosyl-L-methionine-binding residues include Arg-166 and Asp-184. Zn(2+)-binding residues include Cys-348, Cys-351, Cys-384, and Cys-387. A Phosphoserine modification is found at Ser-517. Disordered stretches follow at residues 537–578 and 616–659; these read EDAN…AMEE and RGDQ…PGID. Positions 543–575 match the Nuclear localization signal motif; sequence SRQRGLKRFQANPEANWGPRPRARPGGKAADEA. The C3H1-type zinc-finger motif lies at 600–627; it reads RLKTFPCKRFKEGTCQRGDQCCYSHSPP. At Ser-625 the chain carries Phosphoserine. A phosphothreonine mark is found at Thr-628 and Thr-646.

Belongs to the class I-like SAM-binding methyltransferase superfamily. Trm1 family. In terms of processing, (Microbial infection) Cleaved between Gln-530 and Ala-531 by the 3C-like proteinase nsp5 from human coronavirus SARS-CoV-2, leading to its inactivation.

Its subcellular location is the mitochondrion. It localises to the nucleus. It is found in the cytoplasm. It catalyses the reaction guanosine(26) in tRNA + 2 S-adenosyl-L-methionine = N(2)-dimethylguanosine(26) in tRNA + 2 S-adenosyl-L-homocysteine + 2 H(+). Dimethylates a single guanine residue at position 26 of most nuclear- and mitochondrial-encoded tRNAs using S-adenosyl-L-methionine as donor of the methyl groups. tRNA guanine(26)-dimethylation is required for redox homeostasis and ensure proper cellular proliferation and oxidative stress survival. The polypeptide is tRNA (guanine(26)-N(2))-dimethyltransferase (Homo sapiens (Human)).